The primary structure comprises 267 residues: U6 snRNA phosphodiesterase 1 (267 aa).

Residues 1–72 (MNAAPLVGYS…EDDSARHGGR (72 aa)) form a disordered region. His122 functions as the Proton acceptor in the catalytic mechanism. 122-124 (HLS) lines the AMP pocket. Residues Gln166, Tyr204, and 208 to 212 (SFHVS) contribute to the UMP site. AMP contacts are provided by residues Tyr204 and 206-212 (DPSFHVS). His210 functions as the Proton donor in the catalytic mechanism.

The protein belongs to the 2H phosphoesterase superfamily. USB1 family. Interacts with PLRG1, CDC5L and PRPF19.

The protein localises to the nucleus. It catalyses the reaction a 3'-end uridylyl-uridine-RNA = a 3'-end 2',3'-cyclophospho-uridine-RNA + uridine. It carries out the reaction a 3'-end uridylyl-adenosine-RNA = a 3'-end 2',3'-cyclophospho-uridine-RNA + adenosine. Functionally, 3'-5' RNA exonuclease that trims the 3' end of oligo(U) and oligo(A) tracts of the pre-U6 small nuclear RNA (snRNA) molecule, leading to the formation of a mature U6 snRNA 3' end-terminated with a 2',3'-cyclic phosphate. Participates in the U6 snRNA 3' end processing that prevents U6 snRNA degradation. In addition also removes uridines from the 3' end of U6atac snRNA and possibly the vault RNA VTRNA1-1. This is U6 snRNA phosphodiesterase 1 from Rattus norvegicus (Rat).